We begin with the raw amino-acid sequence, 417 residues long: Cobalamin binding intrinsic factor (417 aa).

The signal sequence occupies residues 1–18 (MAWLTLYLLSVLWAVAGT). Disulfide bonds link Cys26–Cys246, Cys103–Cys288, and Cys143–Cys182. Asp171 serves as a coordination point for cob(II)alamin. At Ser191 the chain carries Phosphoserine. The cob(II)alamin site is built by Asp222 and Gln270. Asn311 and Asn330 each carry an N-linked (GlcNAc...) asparagine glycan. Residues 365 to 370 (SWGLIV) and 386 to 395 (WEFLSGKTPL) contribute to the cob(II)alamin site. Asn413 carries N-linked (GlcNAc...) asparagine glycosylation.

The protein belongs to the eukaryotic cobalamin transport proteins family. In terms of assembly, interacts with CUBN (via CUB domains). As to expression, gastric mucosa.

The protein resides in the secreted. In terms of biological role, promotes absorption of the essential vitamin cobalamin (Cbl) in the ileum. After interaction with CUBN, the CBLIF-cobalamin complex is internalized via receptor-mediated endocytosis. The sequence is that of Cobalamin binding intrinsic factor (Cblif) from Mus musculus (Mouse).